The following is a 160-amino-acid chain: Large ribosomal subunit protein uL13 (160 aa).

This sequence belongs to the universal ribosomal protein uL13 family. Part of the 50S ribosomal subunit.

This protein is one of the early assembly proteins of the 50S ribosomal subunit, although it is not seen to bind rRNA by itself. It is important during the early stages of 50S assembly. The protein is Large ribosomal subunit protein uL13 of Orientia tsutsugamushi (strain Boryong) (Rickettsia tsutsugamushi).